Here is a 274-residue protein sequence, read N- to C-terminus: uncharacterized protein (274 aa).

The segment at 235–274 (ETFDTQQDPKKTPETDKNAAYKGKEKKGKKEERGPRSIMK) is disordered. The segment covering 241–274 (QDPKKTPETDKNAAYKGKEKKGKKEERGPRSIMK) has biased composition (basic and acidic residues).

This is an uncharacterized protein from Treponema pallidum (strain Nichols).